We begin with the raw amino-acid sequence, 360 residues long: 3-dehydroquinate synthase (360 aa).

Residues 104–108, 128–129, Lys-141, and 168–171 contribute to the NAD(+) site; these read GVIGD, TT, and FLDT. Zn(2+) is bound by residues Glu-183, His-243, and His-260.

It belongs to the sugar phosphate cyclases superfamily. Dehydroquinate synthase family. Co(2+) is required as a cofactor. The cofactor is Zn(2+). NAD(+) serves as cofactor.

The protein resides in the cytoplasm. It catalyses the reaction 7-phospho-2-dehydro-3-deoxy-D-arabino-heptonate = 3-dehydroquinate + phosphate. It participates in metabolic intermediate biosynthesis; chorismate biosynthesis; chorismate from D-erythrose 4-phosphate and phosphoenolpyruvate: step 2/7. In terms of biological role, catalyzes the conversion of 3-deoxy-D-arabino-heptulosonate 7-phosphate (DAHP) to dehydroquinate (DHQ). This Streptococcus equi subsp. equi (strain 4047) protein is 3-dehydroquinate synthase.